Here is an 83-residue protein sequence, read N- to C-terminus: uncharacterized protein (83 aa).

Belongs to the UPF0440 family.

This is an uncharacterized protein from Natronomonas pharaonis (strain ATCC 35678 / DSM 2160 / CIP 103997 / JCM 8858 / NBRC 14720 / NCIMB 2260 / Gabara) (Halobacterium pharaonis).